The primary structure comprises 87 residues: Small ribosomal subunit protein uS15 (87 aa).

The protein belongs to the universal ribosomal protein uS15 family. As to quaternary structure, part of the 30S ribosomal subunit. Forms a bridge to the 50S subunit in the 70S ribosome, contacting the 23S rRNA.

Functionally, one of the primary rRNA binding proteins, it binds directly to 16S rRNA where it helps nucleate assembly of the platform of the 30S subunit by binding and bridging several RNA helices of the 16S rRNA. Its function is as follows. Forms an intersubunit bridge (bridge B4) with the 23S rRNA of the 50S subunit in the ribosome. The sequence is that of Small ribosomal subunit protein uS15 from Alkaliphilus oremlandii (strain OhILAs) (Clostridium oremlandii (strain OhILAs)).